A 69-amino-acid chain; its full sequence is Amphipathic peptide CT2 (69 aa).

The signal sequence occupies residues 1–23 (MKTQFVILIVAVVLLQLIANSEA). Phe36 carries the post-translational modification Phenylalanine amide. A propeptide spanning residues 40–69 (GLRNLDNLDDDIFEPEMSEADLRYLQDLLR) is cleaved from the precursor.

This sequence belongs to the non-disulfide-bridged peptide (NDBP) superfamily. Short antimicrobial peptide (group 4) family. Expressed by the venom gland.

The protein resides in the secreted. The protein localises to the target cell membrane. In terms of biological role, amphipathic peptide that shows antibacterial activities against both Gram-positive (MIC=10 uM, 20 uM and 20 uM against S.aureus, B.subtilis and S.agalactiae, respectively) and Gram-negative bacteria (MIC=20 uM, 10 uM, and 10 uM against E.coli, S.typhi, and P.aeruginosa, respectively). Is mildly hemolytic at its MIC range, but shows a strong cytotoxic activity at higher concentrations, reaching 84% lysis at 50 uM. This chain is Amphipathic peptide CT2, found in Vaejovis mexicanus smithi (Mexican scorpion).